Here is a 315-residue protein sequence, read N- to C-terminus: Methionyl-tRNA formyltransferase (315 aa).

113 to 116 (SLLP) is a binding site for (6S)-5,6,7,8-tetrahydrofolate.

The protein belongs to the Fmt family.

It carries out the reaction L-methionyl-tRNA(fMet) + (6R)-10-formyltetrahydrofolate = N-formyl-L-methionyl-tRNA(fMet) + (6S)-5,6,7,8-tetrahydrofolate + H(+). Its function is as follows. Attaches a formyl group to the free amino group of methionyl-tRNA(fMet). The formyl group appears to play a dual role in the initiator identity of N-formylmethionyl-tRNA by promoting its recognition by IF2 and preventing the misappropriation of this tRNA by the elongation apparatus. The chain is Methionyl-tRNA formyltransferase from Klebsiella pneumoniae subsp. pneumoniae (strain ATCC 700721 / MGH 78578).